Reading from the N-terminus, the 712-residue chain is Polyribonucleotide nucleotidyltransferase (712 aa).

Residues Asp487 and Asp493 each contribute to the Mg(2+) site. The KH domain occupies 554 to 613; it reads PKIITMTINPDKIRDVIGPSGKQINKIIEETGVKIDIEQDGTVFISSINQEMNDKAKKII. One can recognise an S1 motif domain in the interval 623-691; it reads GEIYEGKVKR…KQGRVNLSRK (69 aa).

Belongs to the polyribonucleotide nucleotidyltransferase family. Mg(2+) is required as a cofactor.

Its subcellular location is the cytoplasm. It carries out the reaction RNA(n+1) + phosphate = RNA(n) + a ribonucleoside 5'-diphosphate. Involved in mRNA degradation. Catalyzes the phosphorolysis of single-stranded polyribonucleotides processively in the 3'- to 5'-direction. In Bacillus anthracis (strain CDC 684 / NRRL 3495), this protein is Polyribonucleotide nucleotidyltransferase.